The sequence spans 89 residues: Small ribosomal subunit protein uS15 (89 aa).

Positions 1-25 are disordered; it reads MSLDTTEKQQLINTHQTHGTDTGSA. Positions 8-25 are enriched in polar residues; that stretch reads KQQLINTHQTHGTDTGSA.

Belongs to the universal ribosomal protein uS15 family. As to quaternary structure, part of the 30S ribosomal subunit. Forms a bridge to the 50S subunit in the 70S ribosome, contacting the 23S rRNA.

One of the primary rRNA binding proteins, it binds directly to 16S rRNA where it helps nucleate assembly of the platform of the 30S subunit by binding and bridging several RNA helices of the 16S rRNA. Functionally, forms an intersubunit bridge (bridge B4) with the 23S rRNA of the 50S subunit in the ribosome. The protein is Small ribosomal subunit protein uS15 of Parasynechococcus marenigrum (strain WH8102).